The sequence spans 296 residues: MPSMTDTTRSLRDCLAPAKLNLFLHITGRRPDGYHALQSVFQLLDWGDRLHFTLRDDGKVSRVTDVPGVPEESDLVVRAASLLKAHAGATLGVDIEIDKRLPMGAGLGGGSSDAATTLLALNRLWRLDLPRTTLQSLAVKLGADVPFFVFGKNAFAEGIGEALQAVELPARWFLVVTPRVHVPTAAIFSEKSLTRDSKPITITDFLAQRGIDAGWPDSFGRNDMQPVVTSKYAEVAKVVEWFYNLTPARMTGSGASVFAAFKSKADAEAAQAKLPAGWNSAVAESMSEHPLFAFAS.

Lysine 19 is a catalytic residue. 102 to 112 contributes to the ATP binding site; sequence PMGAGLGGGSS. Aspartate 144 is a catalytic residue.

It belongs to the GHMP kinase family. IspE subfamily.

The enzyme catalyses 4-CDP-2-C-methyl-D-erythritol + ATP = 4-CDP-2-C-methyl-D-erythritol 2-phosphate + ADP + H(+). It participates in isoprenoid biosynthesis; isopentenyl diphosphate biosynthesis via DXP pathway; isopentenyl diphosphate from 1-deoxy-D-xylulose 5-phosphate: step 3/6. In terms of biological role, catalyzes the phosphorylation of the position 2 hydroxy group of 4-diphosphocytidyl-2C-methyl-D-erythritol. The protein is 4-diphosphocytidyl-2-C-methyl-D-erythritol kinase of Burkholderia pseudomallei (strain 1710b).